We begin with the raw amino-acid sequence, 179 residues long: 3-hydroxyanthranilate 3,4-dioxygenase (179 aa).

R47 lines the O2 pocket. Positions 51, 57, and 96 each coordinate Fe cation. Residue E57 coordinates substrate. Residues R100 and E110 each contribute to the substrate site. 4 residues coordinate Fe cation: C125, C128, C162, and C165.

The protein belongs to the 3-HAO family. It depends on Fe(2+) as a cofactor.

It carries out the reaction 3-hydroxyanthranilate + O2 = (2Z,4Z)-2-amino-3-carboxymuconate 6-semialdehyde. Its pathway is cofactor biosynthesis; NAD(+) biosynthesis; quinolinate from L-kynurenine: step 3/3. In terms of biological role, catalyzes the oxidative ring opening of 3-hydroxyanthranilate to 2-amino-3-carboxymuconate semialdehyde, which spontaneously cyclizes to quinolinate. This chain is 3-hydroxyanthranilate 3,4-dioxygenase, found in Bacillus cereus (strain ATCC 10987 / NRS 248).